The primary structure comprises 437 residues: Serine--tRNA ligase (437 aa).

Position 244–246 (244–246 (TAE)) interacts with L-serine. Residue 275 to 277 (RSE) coordinates ATP. Glu298 serves as a coordination point for L-serine. 362-365 (EISS) is an ATP binding site. Ser397 serves as a coordination point for L-serine.

It belongs to the class-II aminoacyl-tRNA synthetase family. Type-1 seryl-tRNA synthetase subfamily. Homodimer. The tRNA molecule binds across the dimer.

It is found in the cytoplasm. The catalysed reaction is tRNA(Ser) + L-serine + ATP = L-seryl-tRNA(Ser) + AMP + diphosphate + H(+). The enzyme catalyses tRNA(Sec) + L-serine + ATP = L-seryl-tRNA(Sec) + AMP + diphosphate + H(+). The protein operates within aminoacyl-tRNA biosynthesis; selenocysteinyl-tRNA(Sec) biosynthesis; L-seryl-tRNA(Sec) from L-serine and tRNA(Sec): step 1/1. In terms of biological role, catalyzes the attachment of serine to tRNA(Ser). Is also able to aminoacylate tRNA(Sec) with serine, to form the misacylated tRNA L-seryl-tRNA(Sec), which will be further converted into selenocysteinyl-tRNA(Sec). The polypeptide is Serine--tRNA ligase (Nitrosomonas eutropha (strain DSM 101675 / C91 / Nm57)).